A 175-amino-acid chain; its full sequence is Translation initiation factor IF-3 (175 aa).

This sequence belongs to the IF-3 family. In terms of assembly, monomer.

The protein resides in the cytoplasm. In terms of biological role, IF-3 binds to the 30S ribosomal subunit and shifts the equilibrium between 70S ribosomes and their 50S and 30S subunits in favor of the free subunits, thus enhancing the availability of 30S subunits on which protein synthesis initiation begins. The polypeptide is Translation initiation factor IF-3 (Staphylococcus epidermidis (strain ATCC 35984 / DSM 28319 / BCRC 17069 / CCUG 31568 / BM 3577 / RP62A)).